Reading from the N-terminus, the 72-residue chain is UPF0270 protein YheU (72 aa).

This sequence belongs to the UPF0270 family.

The chain is UPF0270 protein YheU from Salmonella agona (strain SL483).